We begin with the raw amino-acid sequence, 239 residues long: Eukaryotic translation initiation factor 6 (239 aa).

Belongs to the eIF-6 family. In terms of assembly, monomer. Associates with the 60S ribosomal subunit.

Its subcellular location is the cytoplasm. The protein resides in the nucleus. It localises to the nucleolus. Functionally, binds to the 60S ribosomal subunit and prevents its association with the 40S ribosomal subunit to form the 80S initiation complex in the cytoplasm. May also be involved in ribosome biogenesis. The polypeptide is Eukaryotic translation initiation factor 6 (Entamoeba dispar (strain ATCC PRA-260 / SAW760)).